The sequence spans 565 residues: MTTREFDYIICGAGSAGNVLATRLTEDPGVTVLLLEAGGPDYRFDFRTQMPAALAYPLQGRRYNWAYETDPEPHMNHRRMECGRGKGLGGSSLINGMCYIRGNALDYDNWATHKALEDWAYLDCLPYFRKAETRDVGPNDYHGGDGPVSVTTSKPGVNPLFEAMVEAGVQAGYPRTDDLNGYQQEGFGPMDRTVTPRGRRASTARGYLDQARARPNLEIVTHALADRILFSGKRATGVTFLHGSARVTAHARREVLVCSGAIASPQLLQRSGVGPGEWLRELDIPVVLDLPGVGRNLQDHLEMYIQFECKEPVSLYPALKWWNQPKIGLEWMLNGTGLGASNHFEAGGFIRTRDDDPWPNIQYHFLPVAINYNGSNAIEMHGFQAHVGSMRSPSRGRVKLKSRDPHAHPSILFNYMAEALDWREFRDAIRATREIMRQPALDRFRGRELNPGADLKSDNELDTFVRARAETAFHPSCSCKMGYDDMAVVDNEGRVHGIDGLRVVDASIMPIITTGNLNAPTIMIAEKIADRIRQHKPLERSNAQYYVANGAPARGGKPARAPAVV.

7-36 (DYIICGAGSAGNVLATRLTEDPGVTVLLLE) lines the FAD pocket. Catalysis depends on H474, which acts as the Proton acceptor.

Belongs to the GMC oxidoreductase family. The cofactor is FAD.

The catalysed reaction is choline + A = betaine aldehyde + AH2. It carries out the reaction betaine aldehyde + NAD(+) + H2O = glycine betaine + NADH + 2 H(+). The protein operates within amine and polyamine biosynthesis; betaine biosynthesis via choline pathway; betaine aldehyde from choline (cytochrome c reductase route): step 1/1. In terms of biological role, involved in the biosynthesis of the osmoprotectant glycine betaine. Catalyzes the oxidation of choline to betaine aldehyde and betaine aldehyde to glycine betaine at the same rate. This is Oxygen-dependent choline dehydrogenase from Burkholderia pseudomallei (strain K96243).